Here is a 314-residue protein sequence, read N- to C-terminus: DNA-directed RNA polymerase subunit alpha (314 aa).

The segment at 1 to 228 (MIEIEKPKIE…EHLNIFVGLT (228 aa)) is alpha N-terminal domain (alpha-NTD). Positions 245–314 (KEKVLEMTIE…ELGLGLRKDD (70 aa)) are alpha C-terminal domain (alpha-CTD).

It belongs to the RNA polymerase alpha chain family. As to quaternary structure, homodimer. RNAP is composed of a core of 2 alpha, a beta and a beta' subunit. The core is associated with a delta subunit, and at least one of epsilon or omega. When a sigma factor is associated with the core the holoenzyme is formed, which can initiate transcription.

The enzyme catalyses RNA(n) + a ribonucleoside 5'-triphosphate = RNA(n+1) + diphosphate. Its function is as follows. DNA-dependent RNA polymerase catalyzes the transcription of DNA into RNA using the four ribonucleoside triphosphates as substrates. This Bacillus subtilis (strain 168) protein is DNA-directed RNA polymerase subunit alpha.